Consider the following 302-residue polypeptide: Endochitinase 2 (302 aa).

In terms of domain architecture, Chitin-binding type-1 spans 1–42 (EQCGRQAGGALCPGGLCCSQFGWCGSTADYCTVPGCQSQCSG). 7 disulfides stabilise this stretch: Cys3/Cys18, Cys12/Cys24, Cys17/Cys31, Cys36/Cys40, Cys73/Cys136, Cys148/Cys156, and Cys255/Cys287. The active-site Proton donor is the Glu117. Residues 296 to 302 (GVSVDSM) constitute a propeptide, removed in mature form.

Belongs to the glycosyl hydrolase 19 family. Chitinase class I subfamily.

The catalysed reaction is Random endo-hydrolysis of N-acetyl-beta-D-glucosaminide (1-&gt;4)-beta-linkages in chitin and chitodextrins.. In terms of biological role, defense against chitin-containing fungal pathogens. This is Endochitinase 2 from Gossypium hirsutum (Upland cotton).